Reading from the N-terminus, the 138-residue chain is Large ribosomal subunit protein uL16 (138 aa).

The segment covering 1-17 (MLIPRKVKHRKQHHPRQ) has biased composition (basic residues). The interval 1-22 (MLIPRKVKHRKQHHPRQRGIAS) is disordered.

The protein belongs to the universal ribosomal protein uL16 family. Part of the 50S ribosomal subunit.

Binds 23S rRNA and is also seen to make contacts with the A and possibly P site tRNAs. The chain is Large ribosomal subunit protein uL16 from Mycobacterium leprae (strain Br4923).